Consider the following 169-residue polypeptide: Regulator of sigma D (169 aa).

This sequence belongs to the Rsd/AlgQ family. As to quaternary structure, interacts with RpoD.

The protein resides in the cytoplasm. Binds RpoD and negatively regulates RpoD-mediated transcription activation by preventing the interaction between the primary sigma factor RpoD with the catalytic core of the RNA polymerase and with promoter DNA. May be involved in replacement of the RNA polymerase sigma subunit from RpoD to RpoS during the transition from exponential growth to the stationary phase. This chain is Regulator of sigma D, found in Yersinia pseudotuberculosis serotype O:1b (strain IP 31758).